The sequence spans 582 residues: Spermatogenesis-associated protein 7 homolog (582 aa).

Disordered stretches follow at residues 167–192 and 251–289; these read LMSGTQKHASTSPSRHSGCGHGCDRR and RKDFSDQRMEAETQTELSSFNSELGTAEKTSSKDSEVNI. Composition is skewed to polar residues over residues 169–181 and 262–274; these read SGTQKHASTSPSR and ETQTELSSFNSEL.

As to quaternary structure, found in a complex with CFAP410, NEK1 and SPATA7. Interacts with NEK1. Interacts with RPGRIP1. Interacts with RPGR. Interacts with NPHP4. Interacts with NPHP1. Interacts with AHI1. Expressed in the retina (at protein level). Expressed in the choroid region and retinal pigment endothelium, within the photoreceptor layer (at protein level).

Its subcellular location is the cytoplasm. The protein resides in the cytoskeleton. It is found in the cilium axoneme. It localises to the cilium basal body. The protein localises to the cell projection. Its subcellular location is the cilium. The protein resides in the photoreceptor outer segment. Functionally, involved in the maintenance of both rod and cone photoreceptor cells. Required for photoreceptor-specific localization of proximal connecting cilium (CC) proteins RPGR, AHI1, NPHP1, NPHP4, and RPGRIP1 at the distal CC, a photoreceptor-specific extension of the primary cilium transition zone. Maintenance of protein localization at the photoreceptor-specific distal CC is essential for normal microtubule stability and to prevent photoreceptor degeneration. This is Spermatogenesis-associated protein 7 homolog (Spata7) from Mus musculus (Mouse).